The sequence spans 492 residues: Putative cytochrome P450 136 (492 aa).

C439 is a heme binding site.

The protein belongs to the cytochrome P450 family. Requires heme as cofactor.

This chain is Putative cytochrome P450 136 (cyp136), found in Mycobacterium tuberculosis (strain CDC 1551 / Oshkosh).